The following is a 114-amino-acid chain: Large ribosomal subunit protein P2 (114 aa).

Positions 74 to 83 (AAAAGGGGGD) are enriched in gly residues. The interval 74–114 (AAAAGGGGGDAPAAAAEEPKKEEKSEEESDEELGFSLFDDN) is disordered. Residues 98–114 (SEEESDEELGFSLFDDN) show a composition bias toward acidic residues.

It belongs to the eukaryotic ribosomal protein P1/P2 family. As to quaternary structure, P1 and P2 exist as dimers at the large ribosomal subunit. Phosphorylated.

Functionally, plays an important role in the elongation step of protein synthesis. This chain is Large ribosomal subunit protein P2, found in Parthenium argentatum (Guayule rubber plant).